Consider the following 133-residue polypeptide: Nickel-responsive regulator (133 aa).

Ni(2+) contacts are provided by histidine 76, histidine 87, histidine 89, and cysteine 95.

Belongs to the transcriptional regulatory CopG/NikR family. As to quaternary structure, homotetramer. Ni(2+) is required as a cofactor.

Functionally, transcriptional repressor of the nikABCDE operon. Is active in the presence of excessive concentrations of intracellular nickel. This chain is Nickel-responsive regulator, found in Escherichia fergusonii (strain ATCC 35469 / DSM 13698 / CCUG 18766 / IAM 14443 / JCM 21226 / LMG 7866 / NBRC 102419 / NCTC 12128 / CDC 0568-73).